The following is a 452-amino-acid chain: Bis(5'-adenosyl)-triphosphatase enpp4 (452 aa).

The signal sequence occupies residues 1 to 19 (MFGRVFIVAVLYCITICKG). Residues 20–407 (EDPTNSSTPK…NQWCIQVSEA (388 aa)) are Extracellular-facing. Asparagine 24 carries N-linked (GlcNAc...) asparagine glycosylation. Residues aspartate 36 and threonine 72 each coordinate Zn(2+). Threonine 72 acts as the AMP-threonine intermediate in catalysis. Asparagine 93 contributes to the substrate binding site. A glycan (N-linked (GlcNAc...) asparagine) is linked at asparagine 107. Substrate is bound at residue tyrosine 154. Asparagine 155 and asparagine 175 each carry an N-linked (GlcNAc...) asparagine glycan. Positions 189 and 193 each coordinate Zn(2+). Residue aspartate 189 coordinates substrate. Residue asparagine 202 is glycosylated (N-linked (GlcNAc...) asparagine). Residues aspartate 237 and histidine 238 each contribute to the Zn(2+) site. A disulfide bridge links cysteine 254 with cysteine 287. N-linked (GlcNAc...) asparagine glycosylation is found at asparagine 259 and asparagine 327. Histidine 336 is a Zn(2+) binding site. N-linked (GlcNAc...) asparagine glycosylation occurs at asparagine 386. A disulfide bridge connects residues cysteine 394 and cysteine 401. A helical transmembrane segment spans residues 408-428 (IGIVIGAIMVLTTLTCIIIML). Residues 429–452 (KKKMPSARPFSRLQFQDDDDPLIG) lie on the Cytoplasmic side of the membrane.

Belongs to the nucleotide pyrophosphatase/phosphodiesterase family. Zn(2+) serves as cofactor.

It is found in the cell membrane. It catalyses the reaction P(1),P(3)-bis(5'-adenosyl) triphosphate + H2O = AMP + ADP + 2 H(+). In terms of biological role, hydrolyzes extracellular Ap3A into AMP and ADP, and Ap4A into AMP and ATP. Ap3A and Ap4A are diadenosine polyphosphates thought to induce proliferation of vascular smooth muscle cells. Acts as a procoagulant, mediating platelet aggregation at the site of nascent thrombus via release of ADP from Ap3A and activation of ADP receptors. In Xenopus laevis (African clawed frog), this protein is Bis(5'-adenosyl)-triphosphatase enpp4 (enpp4).